The following is a 616-amino-acid chain: Protein NRT1/ PTR FAMILY 2.11 (616 aa).

Residues 1-22 (MERKPLELESTDNHQNPSSAVY) form a disordered region. 12 helical membrane passes run 59–79 (FEKLGIIGTLSNLLVYLTAVF), 87–107 (ATIINAFSGTINFGTFVAAFL), 118–138 (LSVAVIACFLGSFVILLTAAV), 159–179 (GGQIAFLLMGLGFLVVGAGGI), 205–225 (FFNWYFFTFTFAQILSLTLVV), 233–253 (WTIGLTIPAVLMFLACLIFFA), 349–369 (VKCIVRVLPIWFASSIYYLTI), 392–412 (FVIPAATYVVFLMTGMTVFIV), 435–455 (LQRIGTGIFFATASLVVAGFV), 483–503 (AMWLIPQLSLAGVAEAFAAIG), 519–539 (FAGSIFYVGGGVSSYLGSFLI), and 566–586 (LFYFMIAGILAVNFAYFLVMS).

The protein belongs to the major facilitator superfamily. Proton-dependent oligopeptide transporter (POT/PTR) (TC 2.A.17) family. As to expression, expressed in roots. Detected in shoots, stems and flowers. Expressed in veins and in the root vasculature with highest expression in lateral branching points.

The protein localises to the cell membrane. Functionally, high-affinity, proton-dependent glucosinolate-specific transporter. Involved in apoplasmic phloem-loading of glucosinolates and in bidirectional long-distance transport of aliphatic but not indole glucosinolates. May be involved in removal of glucosinolates from the xylem in roots. This chain is Protein NRT1/ PTR FAMILY 2.11 (NPF2.11), found in Arabidopsis thaliana (Mouse-ear cress).